Consider the following 799-residue polypeptide: Signal transducer and activator of transcription 5A (799 aa).

Tyr90 is subject to Phosphotyrosine. Position 128 is a phosphoserine (Ser128). Residues 589-686 (WNDGAILGFV…EVFSKYYTPV (98 aa)) enclose the SH2 domain. Position 682 is a phosphotyrosine (Tyr682). Residue Tyr699 is modified to Phosphotyrosine; by JAK2. Residues 778–799 (DSLDPRLSPPAGLFASTRGSLS) are disordered. Phosphoserine is present on Ser785.

Belongs to the transcription factor STAT family. Forms a homodimer or a heterodimer with a related family member. Binds NR3C1. Interacts with NCOA1 and SOCS7. Interacts with ERBB4. Interacts with EBF4. Interacts with CD69. ISGylated. In terms of processing, tyrosine phosphorylated in response to KITLG/SCF, IL2, IL3, IL7, IL15, CSF2/GMCSF, GH1, PRL, EPO and THPO. Activated KIT promotes phosphorylation on tyrosine residues and subsequent translocation to the nucleus. Tyrosine phosphorylated in response to constitutively activated FGFR1, FGFR2, FGFR3 and FGFR4. Tyrosine phosphorylation is required for DNA-binding activity and dimerization. Serine phosphorylation is also required for maximal transcriptional activity. Tyrosine phosphorylated in response to signaling via activated FLT3; wild-type FLT3 results in much weaker phosphorylation than constitutively activated mutant FLT3. Alternatively, can be phosphorylated by JAK2 at Tyr-699.

It is found in the cytoplasm. Its subcellular location is the nucleus. In terms of biological role, carries out a dual function: signal transduction and activation of transcription. Mediates cellular responses to the cytokine KITLG/SCF and other growth factors. May mediate cellular responses to activated FGFR1, FGFR2, FGFR3 and FGFR4. Binds to the GAS element and activates PRL-induced transcription. Regulates the expression of milk proteins during lactation. This is Signal transducer and activator of transcription 5A (STAT5A) from Sus scrofa (Pig).